A 545-amino-acid chain; its full sequence is CTP synthase (545 aa).

Positions 1–266 (MTTNYIFVTG…DDYICKRFSL (266 aa)) are amidoligase domain. Residue serine 14 participates in CTP binding. Serine 14 is a UTP binding site. Residues 15–20 (SLGKGI) and aspartate 72 each bind ATP. Residues aspartate 72 and glutamate 140 each contribute to the Mg(2+) site. Residues 147 to 149 (DIE), 187 to 192 (KTKPTQ), and lysine 223 each bind CTP. Residues 187 to 192 (KTKPTQ) and lysine 223 each bind UTP. 239-241 (KDI) contacts ATP. Positions 291 to 542 (TIGMVGKYVA…VKAAGAYQKR (252 aa)) constitute a Glutamine amidotransferase type-1 domain. Glycine 352 serves as a coordination point for L-glutamine. The Nucleophile; for glutamine hydrolysis role is filled by cysteine 379. Residues 380-383 (LGMQ), glutamate 403, and arginine 470 each bind L-glutamine. Catalysis depends on residues histidine 515 and glutamate 517.

Belongs to the CTP synthase family. As to quaternary structure, homotetramer.

It carries out the reaction UTP + L-glutamine + ATP + H2O = CTP + L-glutamate + ADP + phosphate + 2 H(+). The enzyme catalyses L-glutamine + H2O = L-glutamate + NH4(+). The catalysed reaction is UTP + NH4(+) + ATP = CTP + ADP + phosphate + 2 H(+). The protein operates within pyrimidine metabolism; CTP biosynthesis via de novo pathway; CTP from UDP: step 2/2. Its activity is regulated as follows. Allosterically activated by GTP, when glutamine is the substrate; GTP has no effect on the reaction when ammonia is the substrate. The allosteric effector GTP functions by stabilizing the protein conformation that binds the tetrahedral intermediate(s) formed during glutamine hydrolysis. Inhibited by the product CTP, via allosteric rather than competitive inhibition. Its function is as follows. Catalyzes the ATP-dependent amination of UTP to CTP with either L-glutamine or ammonia as the source of nitrogen. Regulates intracellular CTP levels through interactions with the four ribonucleotide triphosphates. This Pectobacterium atrosepticum (strain SCRI 1043 / ATCC BAA-672) (Erwinia carotovora subsp. atroseptica) protein is CTP synthase.